The following is a 208-amino-acid chain: Uracil phosphoribosyltransferase (208 aa).

5-phospho-alpha-D-ribose 1-diphosphate-binding positions include R78, R103, and 130–138; that span reads DPMLATGGS. Uracil is bound by residues I193 and 198-200; that span reads GDA. A 5-phospho-alpha-D-ribose 1-diphosphate-binding site is contributed by D199.

Belongs to the UPRTase family. The cofactor is Mg(2+).

It carries out the reaction UMP + diphosphate = 5-phospho-alpha-D-ribose 1-diphosphate + uracil. It functions in the pathway pyrimidine metabolism; UMP biosynthesis via salvage pathway; UMP from uracil: step 1/1. Allosterically activated by GTP. Its function is as follows. Catalyzes the conversion of uracil and 5-phospho-alpha-D-ribose 1-diphosphate (PRPP) to UMP and diphosphate. The sequence is that of Uracil phosphoribosyltransferase from Histophilus somni (strain 129Pt) (Haemophilus somnus).